Here is a 199-residue protein sequence, read N- to C-terminus: Peptidyl-tRNA hydrolase (199 aa).

Tyr-15 contacts tRNA. His-20 functions as the Proton acceptor in the catalytic mechanism. TRNA-binding residues include Tyr-66, Asn-68, and Asn-114.

Belongs to the PTH family. As to quaternary structure, monomer.

The protein localises to the cytoplasm. It catalyses the reaction an N-acyl-L-alpha-aminoacyl-tRNA + H2O = an N-acyl-L-amino acid + a tRNA + H(+). Functionally, hydrolyzes ribosome-free peptidyl-tRNAs (with 1 or more amino acids incorporated), which drop off the ribosome during protein synthesis, or as a result of ribosome stalling. Catalyzes the release of premature peptidyl moieties from peptidyl-tRNA molecules trapped in stalled 50S ribosomal subunits, and thus maintains levels of free tRNAs and 50S ribosomes. The polypeptide is Peptidyl-tRNA hydrolase (Burkholderia multivorans (strain ATCC 17616 / 249)).